The primary structure comprises 157 residues: Large ribosomal subunit protein uL11 (157 aa).

Belongs to the universal ribosomal protein uL11 family.

In terms of biological role, this protein binds directly to 26S ribosomal RNA. This Chlamydomonas reinhardtii (Chlamydomonas smithii) protein is Large ribosomal subunit protein uL11 (RPL12).